The primary structure comprises 424 residues: Phosphoribosylamine--glycine ligase (424 aa).

The ATP-grasp domain occupies 111 to 312 (KAFVKECGIK…LLDLFLATAK (202 aa)). ATP is bound at residue 137 to 189 (IQNASFPLVIKALNKNTSIVHHQEEALKILEDALKQSNEPVIIEPFLEGFELS).

It belongs to the GARS family.

The enzyme catalyses 5-phospho-beta-D-ribosylamine + glycine + ATP = N(1)-(5-phospho-beta-D-ribosyl)glycinamide + ADP + phosphate + H(+). It participates in purine metabolism; IMP biosynthesis via de novo pathway; N(1)-(5-phospho-D-ribosyl)glycinamide from 5-phospho-alpha-D-ribose 1-diphosphate: step 2/2. The protein is Phosphoribosylamine--glycine ligase (purD) of Helicobacter pylori (strain J99 / ATCC 700824) (Campylobacter pylori J99).